A 412-amino-acid polypeptide reads, in one-letter code: 4-hydroxyphenylpyruvate dioxygenase (412 aa).

VOC domains lie at 31-179 (GYDH…LISR) and 209-369 (RIDH…LFTK). Fe cation-binding residues include H212, H295, and E380.

Belongs to the 4HPPD family. Requires Fe cation as cofactor.

The enzyme catalyses 3-(4-hydroxyphenyl)pyruvate + O2 = homogentisate + CO2. It participates in amino-acid degradation; L-phenylalanine degradation; acetoacetate and fumarate from L-phenylalanine: step 3/6. This Neurospora crassa (strain ATCC 24698 / 74-OR23-1A / CBS 708.71 / DSM 1257 / FGSC 987) protein is 4-hydroxyphenylpyruvate dioxygenase.